The following is a 304-amino-acid chain: Acetyl-coenzyme A carboxylase carboxyl transferase subunit beta (304 aa).

The CoA carboxyltransferase N-terminal domain occupies V26 to N295. 4 residues coordinate Zn(2+): C30, C33, C49, and C52. A C4-type zinc finger spans residues C30–C52. Positions S281–E304 are disordered.

It belongs to the AccD/PCCB family. Acetyl-CoA carboxylase is a heterohexamer composed of biotin carboxyl carrier protein (AccB), biotin carboxylase (AccC) and two subunits each of ACCase subunit alpha (AccA) and ACCase subunit beta (AccD). The cofactor is Zn(2+).

The protein localises to the cytoplasm. The enzyme catalyses N(6)-carboxybiotinyl-L-lysyl-[protein] + acetyl-CoA = N(6)-biotinyl-L-lysyl-[protein] + malonyl-CoA. It functions in the pathway lipid metabolism; malonyl-CoA biosynthesis; malonyl-CoA from acetyl-CoA: step 1/1. In terms of biological role, component of the acetyl coenzyme A carboxylase (ACC) complex. Biotin carboxylase (BC) catalyzes the carboxylation of biotin on its carrier protein (BCCP) and then the CO(2) group is transferred by the transcarboxylase to acetyl-CoA to form malonyl-CoA. In Pasteurella multocida (strain Pm70), this protein is Acetyl-coenzyme A carboxylase carboxyl transferase subunit beta.